The following is a 325-amino-acid chain: Formimidoylglutamase (325 aa).

Mn(2+) is bound by residues histidine 130, aspartate 156, histidine 158, aspartate 160, cysteine 244, and aspartate 246.

The protein belongs to the arginase family. Mn(2+) serves as cofactor.

It carries out the reaction N-formimidoyl-L-glutamate + H2O = formamide + L-glutamate. Its pathway is amino-acid degradation; L-histidine degradation into L-glutamate; L-glutamate from N-formimidoyl-L-glutamate (hydrolase route): step 1/1. Its function is as follows. Catalyzes the conversion of N-formimidoyl-L-glutamate to L-glutamate and formamide. This Geobacillus sp. (strain WCH70) protein is Formimidoylglutamase.